A 165-amino-acid chain; its full sequence is SsrA-binding protein (165 aa).

Residues 1–10 (MSKKGKKKSK) are compositionally biased toward basic residues. Residues 1-21 (MSKKGKKKSKNNSSVDGNRRL) are disordered.

Belongs to the SmpB family.

Its subcellular location is the cytoplasm. Required for rescue of stalled ribosomes mediated by trans-translation. Binds to transfer-messenger RNA (tmRNA), required for stable association of tmRNA with ribosomes. tmRNA and SmpB together mimic tRNA shape, replacing the anticodon stem-loop with SmpB. tmRNA is encoded by the ssrA gene; the 2 termini fold to resemble tRNA(Ala) and it encodes a 'tag peptide', a short internal open reading frame. During trans-translation Ala-aminoacylated tmRNA acts like a tRNA, entering the A-site of stalled ribosomes, displacing the stalled mRNA. The ribosome then switches to translate the ORF on the tmRNA; the nascent peptide is terminated with the 'tag peptide' encoded by the tmRNA and targeted for degradation. The ribosome is freed to recommence translation, which seems to be the essential function of trans-translation. The polypeptide is SsrA-binding protein (Prochlorococcus marinus (strain NATL1A)).